The following is a 34-amino-acid chain: Aspartate aminotransferase 2 (34 aa).

It belongs to the class-I pyridoxal-phosphate-dependent aminotransferase family. Homodimer. Requires pyridoxal 5'-phosphate as cofactor.

It catalyses the reaction L-aspartate + 2-oxoglutarate = oxaloacetate + L-glutamate. Functionally, important for the metabolism of amino acids and Krebs-cycle related organic acids. In plants, it is involved in nitrogen metabolism and in aspects of carbon and energy metabolism. The polypeptide is Aspartate aminotransferase 2 (Pseudotsuga menziesii (Douglas-fir)).